Consider the following 157-residue polypeptide: Cytochrome P450 monooxygenase atG (157 aa).

Heme is bound at residue C97.

This sequence belongs to the cytochrome P450 family. Heme serves as cofactor.

The protein operates within secondary metabolite biosynthesis. Cytochrome P450 monooxygenase; part of the gene cluster that mediates the biosynthesis of terreic acid, a quinone epoxide inhibitor of Bruton's tyrosine kinase (BTK). The first step of the pathway is the synthesis of 6-methylsalicylic acid (6-MSA) by the 6-methylsalicylic acid synthase atX. In the biosynthesis of 6-MSA, atX utilizes one acetyl-CoA and three malonyl-CoAs as its substrates and catalyzes a series of programmed reactions including Claisen condensation, reduction, aldol cyclization, and the hydrolytic cleavage that yields 6-MSA. The 6-methylsalicylate 1-monooxygenase atA then catalyzes the decarboxylative hydroxylation of 6-MSA to 3-methylcatechol. The next step is the conversion of 3-methylcatechol to 3-methyl-1,2,4-benzenetriol by cytochrome P450 monooxygenase atE, which is enhanced by cytochrome P450 monooxygenase atG. Then, the epoxidase atD catalyzes the epoxidation and hydroxyl oxidation of 3-methyl-1,2,4-benzenetriol to terremutin. Lastly, GMC oxidoreductase atC oxidizes terremutin to terreic acid. The chain is Cytochrome P450 monooxygenase atG from Aspergillus terreus (strain NIH 2624 / FGSC A1156).